A 313-amino-acid polypeptide reads, in one-letter code: Glutaminase (313 aa).

Substrate is bound by residues serine 64, asparagine 116, glutamate 163, asparagine 170, tyrosine 194, tyrosine 246, and valine 264.

It belongs to the glutaminase family. As to quaternary structure, homotetramer.

The enzyme catalyses L-glutamine + H2O = L-glutamate + NH4(+). This chain is Glutaminase, found in Exiguobacterium sp. (strain ATCC BAA-1283 / AT1b).